The following is a 551-amino-acid chain: MNRRRFIKGSMAMAAVCGSSGIASLFSQAAFAAESDIADGKIVRFDFAGLQSMAQALAKKPWGGAPGPLPDTLANLTPQAYNSIQYDAAHSLWNGVANRQLDIQFFHVGMGFRRRVRMFSVDTTTHLAREIHFRPELFKYNDAGVDTTQLEGQSDLGFAGFRVFKAPELARRDVVSFLGASYFRAVDDTYQYGLSARGLAIDTYTDGQEEFPDFTAFWFDTAKPGDTTFTVYALLDSASVTGAYKFVIHCEKSQVIMDVENHLYARKDIKQLGIAPMTSMFSCGNNERRVCDTIHPQIHDSDRLAMWRGNGEWICRPLNNPQKLQFNAYMDDNPKGFGLLQLDRDFSHYQDVMGWYNKRPSLWVEPRSKWGKGAVSLMEIPTTGETLDNVVCFWQPEKAIKAGDTLAFNYRLYWSAQPPVQSPLARVMATRTGMGGFPEGWAPGEHYPDKWARRFAIDFVGGDLKAAAPKGIEPVITLSSGEAKQIEILYVEPFDGYRIQFDWYPTSDSTAPVDMRMFLRCQGEAISETWLYQYFPPAPDKRRYVDDRIMR.

Residues 1-32 (MNRRRFIKGSMAMAAVCGSSGIASLFSQAAFA) constitute a signal peptide (tat-type signal).

The protein belongs to the OpgD/OpgG family. Post-translationally, predicted to be exported by the Tat system. The position of the signal peptide cleavage has not been experimentally proven.

It is found in the periplasm. It participates in glycan metabolism; osmoregulated periplasmic glucan (OPG) biosynthesis. In terms of biological role, probably involved in the control of the structural glucose backbone of osmoregulated periplasmic glucans (OPGs). The sequence is that of Glucans biosynthesis protein D from Salmonella enteritidis PT4 (strain P125109).